The primary structure comprises 228 residues: Large ribosomal subunit protein mL64 (228 aa).

2 disordered regions span residues 20–44 and 186–228; these read PRSR…DREN and QRKR…KPSS. Residues 98–207 are a coiled coil; it reads TMQESLRVQQ…KKEARIAAMA (110 aa). The Nuclear localization signal motif lies at 184–200; the sequence is KQQRKRLKEERQRQKKE. Basic and acidic residues predominate over residues 186 to 202; that stretch reads QRKRLKEERQRQKKEAR. Residues 212 to 228 show a composition bias toward low complexity; the sequence is QDSAEAQDSAASGKPSS.

The protein belongs to the mitochondrion-specific ribosomal protein mL64 family. As to quaternary structure, component of the mitochondrial ribosome large subunit (39S) which comprises a 16S rRNA and about 50 distinct proteins. Interacts with GADD45A, GADD45B and GADD45G. Interacts with NR4A1 via the NR4A1 AB domain. Interacts with ATAD3A and ATAD3B.

The protein resides in the mitochondrion. It localises to the nucleus. Functionally, acts as a negative regulator of G1 to S cell cycle phase progression by inhibiting cyclin-dependent kinases. Inhibitory effects are additive with GADD45 proteins but also occur in the absence of GADD45 proteins. Acts as a repressor of the orphan nuclear receptor NR4A1 by inhibiting AB domain-mediated transcriptional activity. May be involved in the hormone-mediated regulation of NR4A1 transcriptional activity. May play a role in mitochondrial protein synthesis. The chain is Large ribosomal subunit protein mL64 (Gadd45gip1) from Rattus norvegicus (Rat).